Consider the following 492-residue polypeptide: Ketol-acid reductoisomerase (NADP(+)) (492 aa).

In terms of domain architecture, KARI N-terminal Rossmann spans 14-208 (LDQLGRCRFM…GGHKAGVLES (195 aa)). NADP(+) contacts are provided by residues 45–48 (CGAQ), R68, R76, S78, and 108–110 (DKQ). The active site involves H132. G158 lines the NADP(+) pocket. 2 KARI C-terminal knotted domains span residues 209–344 (SFVA…NAPK) and 345–485 (YDGK…MTDM). Mg(2+)-binding residues include D217, E221, E389, and E393. Residue S414 coordinates substrate.

Belongs to the ketol-acid reductoisomerase family. Mg(2+) serves as cofactor.

It carries out the reaction (2R)-2,3-dihydroxy-3-methylbutanoate + NADP(+) = (2S)-2-acetolactate + NADPH + H(+). It catalyses the reaction (2R,3R)-2,3-dihydroxy-3-methylpentanoate + NADP(+) = (S)-2-ethyl-2-hydroxy-3-oxobutanoate + NADPH + H(+). It participates in amino-acid biosynthesis; L-isoleucine biosynthesis; L-isoleucine from 2-oxobutanoate: step 2/4. The protein operates within amino-acid biosynthesis; L-valine biosynthesis; L-valine from pyruvate: step 2/4. Functionally, involved in the biosynthesis of branched-chain amino acids (BCAA). Catalyzes an alkyl-migration followed by a ketol-acid reduction of (S)-2-acetolactate (S2AL) to yield (R)-2,3-dihydroxy-isovalerate. In the isomerase reaction, S2AL is rearranged via a Mg-dependent methyl migration to produce 3-hydroxy-3-methyl-2-ketobutyrate (HMKB). In the reductase reaction, this 2-ketoacid undergoes a metal-dependent reduction by NADPH to yield (R)-2,3-dihydroxy-isovalerate. The chain is Ketol-acid reductoisomerase (NADP(+)) from Haemophilus influenzae (strain PittGG).